The chain runs to 137 residues: DNA-binding protein H-NS (137 aa).

Residues glutamine 112–alanine 117 mediate DNA binding.

The protein belongs to the histone-like protein H-NS family. In terms of assembly, homodimer that oligomerizes on DNA into higher-order complexes that form bridges between disparate regions of DNA compacting it. Interacts with Hha, Cnu and StpA.

Its subcellular location is the cytoplasm. It is found in the nucleoid. A DNA-binding protein implicated in transcriptional repression and chromosome organization and compaction. Binds nucleation sites in AT-rich DNA and bridges them, forming higher-order nucleoprotein complexes and condensing the chromosome. As many horizontally transferred genes are AT-rich, it plays a central role in silencing foreign genes. A subset of genes are repressed by H-NS in association with other proteins. The chain is DNA-binding protein H-NS (hns) from Escherichia coli O6:H1 (strain CFT073 / ATCC 700928 / UPEC).